A 340-amino-acid chain; its full sequence is Extracellular matrix protein-binding protein emp (340 aa).

An N-terminal signal peptide occupies residues 1 to 26; sequence MKKKLLVLTMSTLFATQLINSNHAKA.

The protein localises to the cell surface. Adhesin that binds to the host cell extracellular matrix proteins fibronectin, fibrinogen, collagen, and vitronectin. This Staphylococcus aureus (strain Mu50 / ATCC 700699) protein is Extracellular matrix protein-binding protein emp (emp).